The chain runs to 89 residues: MSITPERKQALISEYGAKAGDTGSPEVQVAILSERISNLTEHFKSHNKDNHSRRGLLKLVSQRRSLLDYLKKKDEGRYKTLIGRLGLRR.

Belongs to the universal ribosomal protein uS15 family. As to quaternary structure, part of the 30S ribosomal subunit. Forms a bridge to the 50S subunit in the 70S ribosome, contacting the 23S rRNA.

Its function is as follows. One of the primary rRNA binding proteins, it binds directly to 16S rRNA where it helps nucleate assembly of the platform of the 30S subunit by binding and bridging several RNA helices of the 16S rRNA. In terms of biological role, forms an intersubunit bridge (bridge B4) with the 23S rRNA of the 50S subunit in the ribosome. This is Small ribosomal subunit protein uS15 from Azorhizobium caulinodans (strain ATCC 43989 / DSM 5975 / JCM 20966 / LMG 6465 / NBRC 14845 / NCIMB 13405 / ORS 571).